The following is a 1027-amino-acid chain: Fibril-forming collagen alpha chain (1027 aa).

The segment at 1–12 (YRAGPRYIQAQV) is nonhelical region (N-terminal). Residues 1 to 1027 (YRAGPRYIQA…GPPGNSDYGA (1027 aa)) form a disordered region. The triple-helical region stretch occupies residues 13 to 1023 (GPIGPRGPPG…PGPPGPPGNS (1011 aa)). A compositionally biased stretch (pro residues) spans 17-26 (PRGPPGPPGS). A 4-hydroxyproline; partial mark is found at Pro21 and Pro24. A 4-hydroxyproline mark is found at Pro27 and Pro39. At Pro53 the chain carries 3-hydroxyproline; partial. Position 54 is a 4-hydroxyproline (Pro54). The span at 63-72 (SGDDGRDGEP) shows a compositional bias: basic and acidic residues. Position 72 is a 4-hydroxyproline; partial (Pro72). Over residues 73–91 (GPRGGIGPMGPRGAGGMPG) the composition is skewed to gly residues. A 4-hydroxyproline mark is found at Pro90 and Pro93. Lys96 and Lys108 each carry 5-hydroxylysine. O-linked (Gal...) hydroxylysine glycans are attached at residues Lys96 and Lys108. 2 positions are modified to 4-hydroxyproline; partial: Pro123 and Pro128. Position 150 is a 4-hydroxyproline (Pro150). The residue at position 161 (Pro161) is a 3-hydroxyproline; partial. Pro162 carries the 4-hydroxyproline modification. Position 164 is a 3-hydroxyproline; partial (Pro164). 4-hydroxyproline occurs at positions 165, 174, 177, and 180. Positions 168–182 (IGSTGSPGFPGTPGS) are enriched in low complexity. Lys183 and Lys192 each carry 5-hydroxylysine. Lys192 carries an O-linked (Gal...) hydroxylysine glycan. A 4-hydroxyproline mark is found at Pro207, Pro216, Pro219, Pro228, and Pro237. The segment covering 227-249 (EPGASGESGLPGPSGFPGPRGMP) has biased composition (low complexity). Position 243 is a 4-hydroxyproline; partial (Pro243). Pro249 and Pro255 each carry 4-hydroxyproline. The segment covering 259 to 268 (GAKGDGGPTG) has biased composition (gly residues). Lys261 carries the 5-hydroxylysine modification. Residue Lys261 is glycosylated (O-linked (Gal...) hydroxylysine). 4-hydroxyproline; partial occurs at positions 273 and 276. The residue at position 279 (Lys279) is a 5-hydroxylysine. Residue Lys279 is glycosylated (O-linked (Gal...) hydroxylysine). 3 positions are modified to 4-hydroxyproline; partial: Pro285, Pro291, and Pro303. Pro306, Pro312, Pro321, Pro327, and Pro339 each carry 4-hydroxyproline. A 5-hydroxylysine modification is found at Lys342. At Pro348 the chain carries 4-hydroxyproline; partial. The residue at position 351 (Lys351) is a 5-hydroxylysine; partial. 4-hydroxyproline occurs at positions 366, 372, and 375. The segment covering 380–396 (RPGKDGRPGIRGKDGKQ) has biased composition (basic and acidic residues). 4-hydroxyproline; partial is present on Pro381. 4-hydroxyproline is present on Pro387. Residues 398 to 420 (EQGPQGPQGLAGLQGRAGPPGAR) show a composition bias toward low complexity. Pro416 bears the 3-hydroxyproline; partial mark. 4-hydroxyproline occurs at positions 417, 423, 429, and 432. The span at 437-446 (EQGDAGKDGE) shows a compositional bias: basic and acidic residues. The segment covering 447–480 (TGAAGPPGAAGPTGARGPPGPRGQQGFQGLAGAQ) has biased composition (low complexity). 3 positions are modified to 4-hydroxyproline: Pro453, Pro465, and Pro483. 4-hydroxyproline; partial occurs at positions 500, 503, and 506. The segment covering 502-511 (GPAGPGGERG) has biased composition (gly residues). A 4-hydroxyproline mark is found at Pro513 and Pro525. The span at 527 to 543 (ERGATGPAGPTGSPGVA) shows a compositional bias: low complexity. A 4-hydroxyproline; partial mark is found at Pro533 and Pro536. Pro540 is subject to 4-hydroxyproline. Residue Lys546 is modified to 5-hydroxylysine. Pro551 bears the 3-hydroxyproline; partial mark. A 4-hydroxyproline mark is found at Pro552 and Pro561. 5-hydroxylysine is present on residues Lys567 and Lys573. Residue Lys573 is glycosylated (O-linked (Gal...) hydroxylysine). Positions 575 to 599 (SRGDIGPRGKAGERGKDGERGERGE) are enriched in basic and acidic residues. Pro603 is modified (4-hydroxyproline). The residue at position 612 (Lys612) is a 5-hydroxylysine. O-linked (Gal...) hydroxylysine glycosylation is present at Lys612. Pro621 is modified (4-hydroxyproline; partial). A 4-hydroxyproline modification is found at Pro627. Over residues 635-644 (PAGSQGIQGQ) the composition is skewed to low complexity. Pro645 is modified (4-hydroxyproline; partial). Pro647 is modified (3-hydroxyproline; partial). Pro648 carries the 4-hydroxyproline modification. At Lys657 the chain carries 5-hydroxylysine. A glycan (O-linked (Gal...) hydroxylysine) is linked at Lys657. 6 positions are modified to 4-hydroxyproline: Pro663, Pro708, Pro711, Pro714, Pro717, and Pro723. A compositionally biased stretch (low complexity) spans 698 to 710 (ETGAQGEIGLPGS). Positions 714 to 726 (PGLPGPSGQPGPS) are enriched in pro residues. Lys738 bears the 5-hydroxylysine mark. O-linked (Gal...) hydroxylysine glycosylation occurs at Lys738. Residues Pro744 and Pro759 each carry the 4-hydroxyproline modification. Basic and acidic residues predominate over residues 750–771 (QGDRGSDGEPGRDGTKGERGED). At Lys765 the chain carries 5-hydroxylysine. Lys765 carries an O-linked (Gal...) hydroxylysine glycan. Pro773 bears the 3-hydroxyproline; partial mark. 4-hydroxyproline is present on residues Pro774, Pro783, and Pro792. Gly residues predominate over residues 802–814 (GPMGGQGMKGDGG). The residue at position 810 (Lys810) is a 5-hydroxylysine. Lys810 carries O-linked (Gal...) hydroxylysine glycosylation. Pro815 carries the post-translational modification 3-hydroxyproline; partial. A 4-hydroxyproline mark is found at Pro816, Pro843, Pro849, Pro855, Pro861, Pro867, Pro888, Pro894, Pro903, and Pro915. A compositionally biased stretch (low complexity) spans 828 to 848 (AGPQGPTGPSGQAGAPGQEGA). Positions 884-894 (QRGLPGAAGPP) are enriched in low complexity. The segment covering 911–927 (PVGAPGSQGPAGIMGMK) has biased composition (low complexity). Residue Lys927 is modified to 5-hydroxylysine. Lys927 is a glycosylation site (O-linked (Gal...) hydroxylysine). Lys933 carries the 5-hydroxylysine; partial modification. 5-hydroxylysine is present on residues Lys936 and Lys939. O-linked (Gal...) hydroxylysine glycosylation occurs at Lys936. Residues 942-962 (TGLPGLQGLQGTPGHSGESGP) show a composition bias toward low complexity. A 4-hydroxyproline modification is found at Pro945. The residue at position 954 (Pro954) is a 4-hydroxyproline; partial. A 4-hydroxyproline mark is found at Pro963 and Pro966. The span at 973 to 982 (GEAGGRGSQG) shows a compositional bias: gly residues. Residues 983 to 1001 (PPGKDGQPGPSGRVGPRGP) are compositionally biased toward low complexity. Residues Pro984 and Pro990 each carry the 4-hydroxyproline modification. 3-hydroxyproline; partial is present on Pro1010. Residues 1010-1020 (PPGPPGPPGPP) are compositionally biased toward pro residues. Pro1011 is modified (4-hydroxyproline). Pro1013 is subject to 3-hydroxyproline; partial. Pro1014 bears the 4-hydroxyproline mark. Pro1016 is modified (3-hydroxyproline; partial). A 4-hydroxyproline modification is found at Pro1017. Residue Pro1019 is modified to 3-hydroxyproline; partial. Pro1020 is modified (4-hydroxyproline). A nonhelical region (C-terminal) region spans residues 1024 to 1027 (DYGA).

In terms of assembly, homotetramer.

The protein localises to the secreted. It is found in the extracellular space. It localises to the extracellular matrix. Fibril-forming collagen. The chain is Fibril-forming collagen alpha chain from Riftia pachyptila (Vent tube worm).